Consider the following 256-residue polypeptide: 1-(5-phosphoribosyl)-5-[(5-phosphoribosylamino)methylideneamino] imidazole-4-carboxamide isomerase (256 aa).

D8 functions as the Proton acceptor in the catalytic mechanism. D129 functions as the Proton donor in the catalytic mechanism.

The protein belongs to the HisA/HisF family.

It is found in the cytoplasm. It catalyses the reaction 1-(5-phospho-beta-D-ribosyl)-5-[(5-phospho-beta-D-ribosylamino)methylideneamino]imidazole-4-carboxamide = 5-[(5-phospho-1-deoxy-D-ribulos-1-ylimino)methylamino]-1-(5-phospho-beta-D-ribosyl)imidazole-4-carboxamide. It functions in the pathway amino-acid biosynthesis; L-histidine biosynthesis; L-histidine from 5-phospho-alpha-D-ribose 1-diphosphate: step 4/9. The polypeptide is 1-(5-phosphoribosyl)-5-[(5-phosphoribosylamino)methylideneamino] imidazole-4-carboxamide isomerase (Prochlorococcus marinus (strain NATL1A)).